Consider the following 796-residue polypeptide: High affinity nerve growth factor receptor (796 aa).

Positions 1–32 are cleaved as a signal peptide; it reads MLRGGRRGQLGWHSWAAGPGSLLAWLILASAG. Over 33–423 the chain is Extracellular; the sequence is AAPCPDACCP…TPFGVSVAVG (391 aa). 2 disulfides stabilise this stretch: Cys36-Cys41 and Cys40-Cys50. 13 N-linked (GlcNAc...) asparagine glycosylation sites follow: Asn67, Asn95, Asn121, Asn188, Asn202, Asn253, Asn262, Asn281, Asn318, Asn323, Asn338, Asn358, and Asn401. LRR repeat units lie at residues 90–113 and 116–137; these read LGELRNLTIVKSGLRFVAPDAFHF and RLSRLNLSFNALESLSWKTVQG. In terms of domain architecture, LRRCT spans 148-193; it reads NPLHCSCALRWLQRWEEEGLGGVPEQKLQCHGQGPLAHMPNASCGV. Cys154 and Cys191 form a disulfide bridge. Ig-like C2-type domains are found at residues 194–283 and 299–365; these read PTLK…VNVS and WCIP…LAAN. Cys215 and Cys265 are disulfide-bonded. Cys300 and Cys345 form a disulfide bridge. A helical transmembrane segment spans residues 424–439; it reads LAVFACLFLSTLLLVL. The Cytoplasmic segment spans residues 440-796; that stretch reads NKCGRRNKFG…APPVYLDVLG (357 aa). An interaction with SQSTM1 region spans residues 469–490; it reads MTLGGSSLSPTEGKGSGLQGHI. Tyr496 bears the Phosphotyrosine; by autocatalysis mark. Positions 510 to 781 constitute a Protein kinase domain; the sequence is IVLKWELGEG…HSIKDVHARL (272 aa). An ATP-binding site is contributed by 516 to 524; that stretch reads LGEGAFGKV. A DXXLL motif is present at residues 537 to 541; sequence DKMLV. Lys544 lines the ATP pocket. The DXXLL motif lies at 607-611; that stretch reads DAKLL. Asp650 (proton acceptor) is an active-site residue. 4 positions are modified to phosphotyrosine; by autocatalysis: Tyr676, Tyr680, Tyr681, and Tyr791.

The protein belongs to the protein kinase superfamily. Tyr protein kinase family. Insulin receptor subfamily. As to quaternary structure, exists in a dynamic equilibrium between monomeric (low affinity) and dimeric (high affinity) structures. Homodimerization is induced by binding of a NGF dimer. Interacts with SQSTM1; bridges NTRK1 to NGFR. Forms a ternary complex with NGFR and KIDINS220; this complex is affected by the expression levels of KIDINS220 and an increase in KIDINS220 expression leads to a decreased association of NGFR and NTRK1. Interacts with SH2D1A; regulates NTRK1. Interacts (phosphorylated upon activation by NGF) with SHC1; mediates SHC1 phosphorylation and activation. Interacts (phosphorylated upon activation by NGF) with PLCG1; mediates PLCG1 phosphorylation and activation. Interacts (phosphorylated) with SH2B1 and SH2B2. Interacts with GRB2. Interacts with PIK3R1. Interacts with FRS2. Interacts with SORT1; may regulate NTRK1 anterograde axonal transport. Interacts with RAB7A. Found in a complex, at least composed of KIDINS220, MAGI2, NTRK1 and RAPGEF2; the complex is mainly formed at late endosomes in a nerve growth factor (NGF)-dependent manner. Interacts with RAPGEF2; the interaction is strengthened after NGF stimulation. Interacts with PTPRS. Interacts with USP36; USP36 does not deubiquitinate NTRK1. Interacts with GGA3. Interacts with TSPAN1; this interaction promotes NTRK1 stability. Ligand-mediated autophosphorylation. Interaction with SQSTM1 is phosphotyrosine-dependent. Autophosphorylation at Tyr-496 mediates interaction and phosphorylation of SHC1. In terms of processing, N-glycosylated. Isoform TrkA-I and isoform TrkA-II are N-glycosylated. Post-translationally, ubiquitinated. Undergoes polyubiquitination upon activation; regulated by NGFR. Ubiquitination by NEDD4L leads to degradation. Ubiquitination regulates the internalization of the receptor. As to expression, isoform TrkA-I is found in most non-neuronal tissues. Isoform TrkA-II is primarily expressed in neuronal cells. TrkA-III is specifically expressed by pluripotent neural stem and neural crest progenitors.

It is found in the cell membrane. The protein resides in the early endosome membrane. Its subcellular location is the late endosome membrane. The protein localises to the recycling endosome membrane. The enzyme catalyses L-tyrosyl-[protein] + ATP = O-phospho-L-tyrosyl-[protein] + ADP + H(+). The pro-survival signaling effect of NTRK1 in neurons requires its endocytosis into signaling early endosomes and its retrograde axonal transport. This is regulated by different proteins including CFL1, RAC1 and SORT1. NTF3 is unable to induce this signaling probably due to the lability of the NTF3-NTRK1 complex in endosomes. SH2D1A inhibits the autophosphorylation of the receptor, and alters the recruitment and activation of downstream effectors and signaling cascades. Regulated by NGFR. In terms of biological role, receptor tyrosine kinase involved in the development and the maturation of the central and peripheral nervous systems through regulation of proliferation, differentiation and survival of sympathetic and nervous neurons. High affinity receptor for NGF which is its primary ligand. Can also bind and be activated by NTF3/neurotrophin-3. However, NTF3 only supports axonal extension through NTRK1 but has no effect on neuron survival. Upon dimeric NGF ligand-binding, undergoes homodimerization, autophosphorylation and activation. Recruits, phosphorylates and/or activates several downstream effectors including SHC1, FRS2, SH2B1, SH2B2 and PLCG1 that regulate distinct overlapping signaling cascades driving cell survival and differentiation. Through SHC1 and FRS2 activates a GRB2-Ras-MAPK cascade that regulates cell differentiation and survival. Through PLCG1 controls NF-Kappa-B activation and the transcription of genes involved in cell survival. Through SHC1 and SH2B1 controls a Ras-PI3 kinase-AKT1 signaling cascade that is also regulating survival. In absence of ligand and activation, may promote cell death, making the survival of neurons dependent on trophic factors. Resistant to NGF, it constitutively activates AKT1 and NF-kappa-B and is unable to activate the Ras-MAPK signaling cascade. Antagonizes the anti-proliferative NGF-NTRK1 signaling that promotes neuronal precursors differentiation. Isoform TrkA-III promotes angiogenesis and has oncogenic activity when overexpressed. The sequence is that of High affinity nerve growth factor receptor (NTRK1) from Homo sapiens (Human).